Reading from the N-terminus, the 184-residue chain is 1,6-anhydro-N-acetylmuramyl-L-alanine amidase AmpD (184 aa).

The N-acetylmuramoyl-L-alanine amidase domain maps to 30 to 171 (QDISLLVIHY…ISPKRKIDPG (142 aa)). H38 contributes to the Zn(2+) binding site. The Proton acceptor role is filled by E120. 2 residues coordinate Zn(2+): H159 and D169.

It belongs to the N-acetylmuramoyl-L-alanine amidase 2 family. It depends on Zn(2+) as a cofactor.

The protein resides in the cytoplasm. It carries out the reaction Hydrolyzes the link between N-acetylmuramoyl residues and L-amino acid residues in certain cell-wall glycopeptides.. Involved in cell wall peptidoglycan recycling. Specifically cleaves the amide bond between the lactyl group of N-acetylmuramic acid and the alpha-amino group of the L-alanine in degradation products containing an anhydro N-acetylmuramyl moiety. The protein is 1,6-anhydro-N-acetylmuramyl-L-alanine amidase AmpD (ampD) of Haemophilus influenzae (strain ATCC 51907 / DSM 11121 / KW20 / Rd).